A 524-amino-acid chain; its full sequence is PiggyBac transposable element-derived protein 5 (524 aa).

Residues 30-117 form a disordered region; that stretch reads DDVFGESGPD…DTGGPTRKMP (88 aa). Residues 47–59 are compositionally biased toward low complexity; it reads STSAASRSSSAAS. Over residues 67–79 the composition is skewed to pro residues; the sequence is PGPPGAAPPPPRA. A compositionally biased stretch (basic and acidic residues) spans 98–108; it reads LRDRPPPRFED. S521 is subject to Phosphoserine.

Its subcellular location is the nucleus. Its function is as follows. Transposase that mediates sequence-specific genomic rearrangements. Can induce genomic rearrangements that inactivate the HPRT1 gene. The sequence is that of PiggyBac transposable element-derived protein 5 (PGBD5) from Homo sapiens (Human).